Here is a 217-residue protein sequence, read N- to C-terminus: Small ribosomal subunit protein uS3 (217 aa).

One can recognise a KH type-2 domain in the interval 24 to 93 (IKEFLEYKLS…NPQIDVIDVS (70 aa)).

Belongs to the universal ribosomal protein uS3 family. In terms of assembly, part of the 30S ribosomal subunit.

In terms of biological role, binds the lower part of the 30S subunit head. This chain is Small ribosomal subunit protein uS3, found in Pyrobaculum islandicum (strain DSM 4184 / JCM 9189 / GEO3).